Here is a 350-residue protein sequence, read N- to C-terminus: GTPase Obg (350 aa).

The Obg domain maps to 1 to 158 (MFIDSVKITL…RLVRLELKLI (158 aa)). One can recognise an OBG-type G domain in the interval 159–339 (ADVGLVGFPN…LKFMLLEEIK (181 aa)). Residues 165–172 (GFPNVGKS), 190–194 (FTTLT), 212–215 (DIPG), 280–283 (SKSD), and 320–322 (SSL) contribute to the GTP site. Residues Ser172 and Thr192 each contribute to the Mg(2+) site.

It belongs to the TRAFAC class OBG-HflX-like GTPase superfamily. OBG GTPase family. Monomer. Mg(2+) is required as a cofactor.

Its subcellular location is the cytoplasm. Functionally, an essential GTPase which binds GTP, GDP and possibly (p)ppGpp with moderate affinity, with high nucleotide exchange rates and a fairly low GTP hydrolysis rate. Plays a role in control of the cell cycle, stress response, ribosome biogenesis and in those bacteria that undergo differentiation, in morphogenesis control. This is GTPase Obg from Campylobacter jejuni subsp. jejuni serotype O:2 (strain ATCC 700819 / NCTC 11168).